A 172-amino-acid chain; its full sequence is Type II secretion system protein H (172 aa).

Residues 1-6 constitute a propeptide, leader sequence; sequence MRASRG. The residue at position 7 (phenylalanine 7) is an N-methylphenylalanine. The chain crosses the membrane as a helical span at residues 7 to 27; that stretch reads FTLIELMVVMVIISVLIGLAV.

Belongs to the GSP H family. In terms of assembly, type II secretion is composed of four main components: the outer membrane complex, the inner membrane complex, the cytoplasmic secretion ATPase and the periplasm-spanning pseudopilus. Forms the tip of the type II pseudopilus by interacting with XcpV, XcpW and XcpX. Interacts with core component XcpT. Post-translationally, cleaved by prepilin peptidase. Methylated by prepilin peptidase at the amino group of the N-terminal phenylalanine once the leader sequence is cleaved by prepilin peptidase.

The protein localises to the cell inner membrane. Its function is as follows. Component of the type II secretion system required for the energy-dependent secretion of extracellular factors such as proteases and toxins from the periplasm. Part of the pseudopilus tip complex that is critical for the recognition and binding of secretion substrates. Type II pseudopilus confers increased bacterial adhesive capabilities. This chain is Type II secretion system protein H (xcpU), found in Pseudomonas aeruginosa (strain ATCC 15692 / DSM 22644 / CIP 104116 / JCM 14847 / LMG 12228 / 1C / PRS 101 / PAO1).